The sequence spans 506 residues: Cytochrome P450 monooxygenase atr2 (506 aa).

A helical membrane pass occupies residues 18 to 38; it reads VFAGLVLASLLTTTYCIWNIF. Cys-451 provides a ligand contact to heme.

This sequence belongs to the cytochrome P450 family. The cofactor is heme.

The protein localises to the membrane. The catalysed reaction is 4-O-demethylbarbatate + reduced [NADPH--hemoprotein reductase] + O2 = proatranorin II + oxidized [NADPH--hemoprotein reductase] + H2O + H(+). The enzyme catalyses proatranorin II + reduced [NADPH--hemoprotein reductase] + O2 = proatranorin III + oxidized [NADPH--hemoprotein reductase] + 2 H2O + H(+). It carries out the reaction proatranorin I + reduced [NADPH--hemoprotein reductase] + O2 = proatranorin IV + oxidized [NADPH--hemoprotein reductase] + H2O + H(+). It catalyses the reaction proatranorin IV + reduced [NADPH--hemoprotein reductase] + O2 = atranorin + oxidized [NADPH--hemoprotein reductase] + 2 H2O + H(+). It participates in secondary metabolite biosynthesis; terpenoid biosynthesis. Its function is as follows. Cytochrome P450 monooxygenase; part of the gene cluster that mediates the biosynthesis of atranorin, a depside of polyketide origin that accumulates in the cortical or medullary layers of lichen thalli. Atr2 performs the oxidation at the C-9 position of 4-O-demethylbarbatic acid to yield proatranorin III via proatranorin II. Atr2 is also able to oxidize the atr3 product proatranorin I to produce the final compound atranorin. The first step in the pathway is performed by the non-reducing polyketide synthase atr1 that produces 4-O-demethylbarbatic acid composed of two 3-methylorsellinic acid (3MOA) moieties. The pathway continues with the actions of the cytochrome P450 monooygenase atr2 that catalizes the oxidation of c-9 and the O-methyltransferase atr3 that performs the methylation of the carboxyl group to yield atranorin, via the proatranorin II and III intermediates if atr2 acts first, or the proatranorin I intermediate if atr3 acts first. The chain is Cytochrome P450 monooxygenase atr2 from Stereocaulon alpinum (Alpine snow lichen).